The chain runs to 475 residues: Ribulose bisphosphate carboxylase large chain (475 aa).

Positions 123 and 173 each coordinate substrate. K175 serves as the catalytic Proton acceptor. Position 177 (K177) interacts with substrate. Mg(2+) contacts are provided by K201, D203, and E204. K201 bears the N6-carboxylysine mark. Residue H294 is the Proton acceptor of the active site. Residues R295, H327, and S379 each contribute to the substrate site.

It belongs to the RuBisCO large chain family. Type I subfamily. In terms of assembly, heterohexadecamer of 8 large chains and 8 small chains; disulfide-linked. The disulfide link is formed within the large subunit homodimers. Interacts with assembly factor Raf1 which helps form the holoenzyme, most interaction (and folding) occurs in the cytoplasm. The cofactor is Mg(2+). The disulfide bond which can form in the large chain dimeric partners within the hexadecamer appears to be associated with oxidative stress and protein turnover.

The protein localises to the carboxysome. The protein resides in the cytoplasm. It carries out the reaction 2 (2R)-3-phosphoglycerate + 2 H(+) = D-ribulose 1,5-bisphosphate + CO2 + H2O. It catalyses the reaction D-ribulose 1,5-bisphosphate + O2 = 2-phosphoglycolate + (2R)-3-phosphoglycerate + 2 H(+). In terms of biological role, ruBisCO catalyzes two reactions: the carboxylation of D-ribulose 1,5-bisphosphate, the primary event in carbon dioxide fixation, as well as the oxidative fragmentation of the pentose substrate in the photorespiration process. Both reactions occur simultaneously and in competition at the same active site. The polypeptide is Ribulose bisphosphate carboxylase large chain (Thermosynechococcus vestitus (strain NIES-2133 / IAM M-273 / BP-1)).